The following is a 520-amino-acid chain: Putative cytochrome P450 CYP13A3 (520 aa).

Cys464 serves as a coordination point for heme.

This sequence belongs to the cytochrome P450 family. It depends on heme as a cofactor.

In terms of biological role, cytochromes P450 are a group of heme-thiolate monooxygenases. They oxidize a variety of structurally unrelated compounds, including steroids, fatty acids, and xenobiotics. In Caenorhabditis elegans, this protein is Putative cytochrome P450 CYP13A3 (cyp-13A3).